Here is a 432-residue protein sequence, read N- to C-terminus: Adenylosuccinate synthetase (432 aa).

GTP-binding positions include 12–18 (GDEGKGK) and 40–42 (GHT). Catalysis depends on Asp-13, which acts as the Proton acceptor. Asp-13 and Gly-40 together coordinate Mg(2+). Residues 13–16 (DEGK), 38–41 (NAGH), Thr-131, Arg-145, Gln-226, Thr-241, and Arg-305 each bind IMP. The active-site Proton donor is the His-41. 301–307 (ATTGRPR) serves as a coordination point for substrate. GTP-binding positions include Arg-307, 333-335 (KLD), and 415-417 (STG).

The protein belongs to the adenylosuccinate synthetase family. In terms of assembly, homodimer. Requires Mg(2+) as cofactor.

It is found in the cytoplasm. It catalyses the reaction IMP + L-aspartate + GTP = N(6)-(1,2-dicarboxyethyl)-AMP + GDP + phosphate + 2 H(+). The protein operates within purine metabolism; AMP biosynthesis via de novo pathway; AMP from IMP: step 1/2. Its function is as follows. Plays an important role in the de novo pathway of purine nucleotide biosynthesis. Catalyzes the first committed step in the biosynthesis of AMP from IMP. This is Adenylosuccinate synthetase from Magnetococcus marinus (strain ATCC BAA-1437 / JCM 17883 / MC-1).